A 69-amino-acid chain; its full sequence is U-scoloptoxin(21)-Sm2a (69 aa).

Positions 1 to 21 (MFFLGFIIVCASEEQSDNRLP) are cleaved as a signal peptide. Positions 46–69 (ANDPNGPGRRRRSPIVREEILRHP) are disordered. Over residues 60 to 69 (IVREEILRHP) the composition is skewed to basic and acidic residues.

The protein belongs to the scoloptoxin-21 family. In terms of tissue distribution, expressed by the venom gland.

It localises to the secreted. The polypeptide is U-scoloptoxin(21)-Sm2a (Scolopendra morsitans (Tanzanian blue ringleg centipede)).